The following is a 367-amino-acid chain: Diphthine methyltransferase homolog (367 aa).

4 WD repeats span residues 84–124 (NFNS…KKLE), 132–173 (SLSN…SKVT), 180–220 (AHDY…NHND), and 234–274 (RCDM…QPII).

The protein belongs to the DPH7 family.

The enzyme catalyses diphthine methyl ester-[translation elongation factor 2] + H2O = diphthine-[translation elongation factor 2] + methanol + H(+). The protein operates within protein modification; peptidyl-diphthamide biosynthesis. Catalyzes the demethylation of diphthine methyl ester to form diphthine, an intermediate diphthamide biosynthesis, a post-translational modification of histidine which occurs in translation elongation factor 2 (efbA). The protein is Diphthine methyltransferase homolog (wdr85) of Dictyostelium discoideum (Social amoeba).